A 530-amino-acid polypeptide reads, in one-letter code: Purine-cytosine permease FCY22 (530 aa).

T46 is modified (phosphothreonine). 12 consecutive transmembrane segments (helical) span residues 96-116 (MVIVAYSVGALGPLVFGLNFG), 119-139 (VLVIIFFNILGLIPVALFSLF), 162-182 (FFSLVNVIACVGWCVLNISVS), 197-217 (CPIWAGCLIIAGGTVLVTFFG), 220-240 (VVHAYEKWSWVPNFAAFLVII), 263-283 (GVLSFGSSVFGSAAGWATYAA), 298-318 (IFFSVVAGLAFPLFFTMILGA), 345-365 (AILVPNSLNGFGQFCCVLLAL), 372-392 (VPGMYTVALSAQALWAPLAKI), 396-416 (VWTMAGNAATLGISIPATYYF), 418-438 (GFMENFMDSIGYYLAIYIAIA), and 463-483 (LPIGIAGTAALIAGAFGVALG).

Belongs to the purine-cytosine permease (2.A.39) family.

It localises to the membrane. In terms of biological role, probable purine-cytosine permease. This Saccharomyces cerevisiae (strain ATCC 204508 / S288c) (Baker's yeast) protein is Purine-cytosine permease FCY22 (FCY22).